The chain runs to 158 residues: Probable cyclic pyranopterin monophosphate synthase (158 aa).

Residues 78–80 (MCH) and 114–115 (ME) contribute to the substrate site. Asp-129 is a catalytic residue.

The protein belongs to the MoaC family. Homohexamer; trimer of dimers.

The catalysed reaction is (8S)-3',8-cyclo-7,8-dihydroguanosine 5'-triphosphate = cyclic pyranopterin phosphate + diphosphate. The protein operates within cofactor biosynthesis; molybdopterin biosynthesis. Its function is as follows. Catalyzes the conversion of (8S)-3',8-cyclo-7,8-dihydroguanosine 5'-triphosphate to cyclic pyranopterin monophosphate (cPMP). The protein is Probable cyclic pyranopterin monophosphate synthase of Methanosarcina acetivorans (strain ATCC 35395 / DSM 2834 / JCM 12185 / C2A).